The primary structure comprises 235 residues: N,O-diacetylmuramidase (235 aa).

The signal sequence occupies residues 1-17 (MKLSLLTVAAAAGAAVA). One can recognise a Ch-type lysozyme domain in the interval 29–235 (SVQGFDISGY…DQLQRFAKGG (207 aa)). Active-site residues include aspartate 34, aspartate 122, and glutamate 124. Cysteine 132 and cysteine 171 form a disulfide bridge.

It belongs to the glycosyl hydrolase 25 family.

The protein localises to the secreted. It catalyses the reaction Hydrolysis of (1-&gt;4)-beta-linkages between N-acetylmuramic acid and N-acetyl-D-glucosamine residues in a peptidoglycan and between N-acetyl-D-glucosamine residues in chitodextrins.. In terms of biological role, this enzyme has both lysozyme (acetylmuramidase) and diacetylmuramidase activities. The protein is N,O-diacetylmuramidase of Arthroderma benhamiae (strain ATCC MYA-4681 / CBS 112371) (Trichophyton mentagrophytes).